The primary structure comprises 336 residues: N-acetyl-gamma-glutamyl-phosphate reductase (336 aa).

Cysteine 143 is an active-site residue.

Belongs to the NAGSA dehydrogenase family. Type 1 subfamily.

It is found in the cytoplasm. The enzyme catalyses N-acetyl-L-glutamate 5-semialdehyde + phosphate + NADP(+) = N-acetyl-L-glutamyl 5-phosphate + NADPH + H(+). Its pathway is amino-acid biosynthesis; L-arginine biosynthesis; N(2)-acetyl-L-ornithine from L-glutamate: step 3/4. Functionally, catalyzes the NADPH-dependent reduction of N-acetyl-5-glutamyl phosphate to yield N-acetyl-L-glutamate 5-semialdehyde. This chain is N-acetyl-gamma-glutamyl-phosphate reductase, found in Dictyoglomus thermophilum (strain ATCC 35947 / DSM 3960 / H-6-12).